Consider the following 548-residue polypeptide: Solute carrier family 22 member 7 (548 aa).

The chain crosses the membrane as a helical span at residues 21–41 (VALLALPRVLLPLHFLLPIFL). N-linked (GlcNAc...) asparagine glycosylation occurs at Asn-91. Helical transmembrane passes span 146-166 (AAST…GYLS), 180-200 (VSTL…MFAI), 204-224 (LTGS…LEWL), 234-254 (VLSS…GYLI), 259-279 (WLLL…WWVP), 346-366 (ISLC…GLSL), 376-397 (YQTQ…YLSV), 404-423 (LTQA…RLLV), 432-452 (TVLA…AYLF), 466-486 (MGLT…AALL), and 493-513 (LPKL…LLLP). The active-site Important for glutamate counteranion efflux is Phe-441. The interval 522–548 (ETIQDVERKSAPTSLQEEEMPMKQVQN) is disordered.

Belongs to the major facilitator (TC 2.A.1) superfamily. Organic cation transporter (TC 2.A.1.19) family. In terms of tissue distribution, mainly expressed in liver and kidney. In kidney, expressed in proximal tubular cells. Also expressed in pancreas, small intestine, spinal cord, lung, brain and heart. Expressed in fetal liver.

Its subcellular location is the basolateral cell membrane. The protein localises to the apical cell membrane. It localises to the cell membrane. The protein resides in the cytoplasm. It is found in the cytosol. It catalyses the reaction orotate(out) + L-glutamate(in) = orotate(in) + L-glutamate(out). The catalysed reaction is 3',5'-cyclic GMP(in) = 3',5'-cyclic GMP(out). The enzyme catalyses GMP(in) = GMP(out). It carries out the reaction 2'-deoxyguanosine(in) = 2'-deoxyguanosine(out). It catalyses the reaction GDP(in) = GDP(out). The catalysed reaction is guanosine(in) = guanosine(out). The enzyme catalyses GTP(in) = GTP(out). It carries out the reaction 3',5'-cyclic AMP(in) = 3',5'-cyclic AMP(out). It catalyses the reaction creatinine(in) = creatinine(out). The catalysed reaction is prostaglandin E2(out) = prostaglandin E2(in). The enzyme catalyses 2-oxoglutarate(in) = 2-oxoglutarate(out). It carries out the reaction glutarate(in) = glutarate(out). It catalyses the reaction urate(out) = urate(in). The catalysed reaction is estrone 3-sulfate(out) = estrone 3-sulfate(in). The enzyme catalyses prostaglandin F2alpha(out) = prostaglandin F2alpha(in). Functions as a Na(+)-independent bidirectional multispecific transporter. Contributes to the renal and hepatic elimination of endogenous organic compounds from the systemic circulation into the urine and bile, respectively. Capable of transporting a wide range of purine and pyrimidine nucleobases, nucleosides and nucleotides, with cGMP, 2'deoxyguanosine and GMP being the preferred substrates. Functions as a pH- and chloride-independent cGMP bidirectional facilitative transporter that can regulate both intracellular and extracellular levels of cGMP and may be involved in cGMP signaling pathways. Mediates orotate/glutamate bidirectional exchange and most likely display a physiological role in hepatic release of glutamate into the blood. Involved in renal secretion and possible reabsorption of creatinine. Able to uptake prostaglandin E2 (PGE2) and may contribute to PGE2 renal excretion. Also transports alpha-ketoglutarate and urate. Apart from the orotate/glutamate exchange, the counterions for the uptake of other SLC22A7/OAT2 substrates remain to be identified. Its function is as follows. Non functional transporter. In terms of biological role, involved in the uptake of prostaglandin F2-alpha (PGF2-alpha). The sequence is that of Solute carrier family 22 member 7 from Homo sapiens (Human).